A 209-amino-acid chain; its full sequence is Ribosomal RNA small subunit methyltransferase G (209 aa).

Residues G75, L80, 126 to 127 (VE), and R141 each bind S-adenosyl-L-methionine.

This sequence belongs to the methyltransferase superfamily. RNA methyltransferase RsmG family.

It is found in the cytoplasm. It catalyses the reaction guanosine(527) in 16S rRNA + S-adenosyl-L-methionine = N(7)-methylguanosine(527) in 16S rRNA + S-adenosyl-L-homocysteine. In terms of biological role, specifically methylates the N7 position of guanine in position 527 of 16S rRNA. The chain is Ribosomal RNA small subunit methyltransferase G from Colwellia psychrerythraea (strain 34H / ATCC BAA-681) (Vibrio psychroerythus).